The following is a 413-amino-acid chain: Putative competence-damage inducible protein (413 aa).

The protein belongs to the CinA family.

This Lacticaseibacillus casei (strain BL23) (Lactobacillus casei) protein is Putative competence-damage inducible protein.